The following is a 386-amino-acid chain: Adiponectin receptor protein 2 (386 aa).

A disordered region spans residues 1–72; the sequence is MNEPAKHRLG…ECHDDNSQED (72 aa). The Cytoplasmic portion of the chain corresponds to 1–147; that stretch reads MNEPAKHRLG…SIFRIHTETG (147 aa). Basic and acidic residues predominate over residues 15 to 31; sequence PEPDIRLRKGHQLDDTR. The segment covering 58–72 has biased composition (acidic residues); the sequence is SPEEPECHDDNSQED. A helical membrane pass occupies residues 148–168; sequence NIWTHLLGCVFFLCLGIFYMF. The Extracellular portion of the chain corresponds to 169–181; the sequence is RPNISFVAPLQEK. A helical transmembrane segment spans residues 182–202; it reads VVFGLFFLGAILCLSFSWLFH. His-202 is a binding site for Zn(2+). The Cytoplasmic segment spans residues 203 to 213; the sequence is TVYCHSEGVSR. A helical transmembrane segment spans residues 214–234; sequence LFSKLDYSGIALLIMGSFVPW. Residues 235–245 are Extracellular-facing; the sequence is LYYSFYCNPQP. The helical transmembrane segment at 246–266 threads the bilayer; that stretch reads CFIYLIVICVLGIAAIIVSQW. Topologically, residues 267–273 are cytoplasmic; it reads DMFATPQ. Residues 274 to 294 form a helical membrane-spanning segment; the sequence is YRGVRAGVFVGLGLSGIIPTL. Over 295-309 the chain is Extracellular; sequence HYVISEGFLKAATIG. The helical transmembrane segment at 310 to 330 threads the bilayer; that stretch reads QIGWLMLMASLYITGAALYAA. Over 331–348 the chain is Cytoplasmic; the sequence is RIPERFFPGKCDIWFHSH. 2 residues coordinate Zn(2+): His-348 and His-352. A helical membrane pass occupies residues 349–369; that stretch reads QLFHIFVVAGAFVHFHGVSNL. Residues 370–386 are Extracellular-facing; the sequence is QEFRFMIGGGCTEEDAL.

Belongs to the ADIPOR family. As to quaternary structure, may form homooligomers and heterooligomers with ADIPOR1. Interacts with APPL2 (via BAR domain); ADIPOQ dissociates this interaction. Detected in liver and quadriceps muscle (at protein level). Highly expressed in liver. Highly expressed in white adipose tissue, and at intermediate levels in brown adipose tissue. Expressed at intermediate level in heart, kidney, lung and skeletal muscle. Weakly expressed in brain, spleen and testis.

The protein localises to the cell membrane. Receptor for ADIPOQ, an essential hormone secreted by adipocytes that regulates glucose and lipid metabolism. Required for normal body fat and glucose homeostasis. ADIPOQ-binding activates a signaling cascade that leads to increased PPARA activity, and ultimately to increased fatty acid oxidation and glucose uptake. Has intermediate affinity for globular and full-length adiponectin. Required for normal revascularization after chronic ischemia caused by severing of blood vessels. The protein is Adiponectin receptor protein 2 of Mus musculus (Mouse).